We begin with the raw amino-acid sequence, 666 residues long: Neopullulanase 1 (666 aa).

The first 29 residues, 1–29, serve as a signal peptide directing secretion; the sequence is MIKLLKPMSLSILLVFILSFSFPFPTAKA. Positions 31, 33, 35, 71, 125, 174, 176, 179, 180, 216, and 218 each coordinate Ca(2+). A substrate-binding site is contributed by His-296. Ca(2+) is bound by residues Asp-305, Asn-309, Phe-310, Ser-312, and Glu-317. Arg-383 serves as a coordination point for substrate. The active-site Nucleophile is the Asp-385. Catalysis depends on Glu-425, which acts as the Proton donor. Substrate is bound by residues 500–501, Asp-545, and Arg-549; that span reads HD.

The protein belongs to the glycosyl hydrolase 13 family. Ca(2+) serves as cofactor.

The protein localises to the secreted. It carries out the reaction Hydrolysis of pullulan to panose (6-alpha-D-glucosylmaltose).. In terms of biological role, endohydrolysis of 1,4-alpha-glucosidic linkages in pullulan to form panose. Also hydrolyzes cyclodextrins. This is Neopullulanase 1 (tvaI) from Thermoactinomyces vulgaris.